Consider the following 554-residue polypeptide: Membrane protein insertase YidC (554 aa).

5 consecutive transmembrane segments (helical) span residues 7-24 (VLWV…DNWQ), 362-382 (FVGN…AVFF), 436-456 (LPVV…LASV), 475-495 (PFFI…SLNP), and 510-530 (PIAF…YYVV).

The protein belongs to the OXA1/ALB3/YidC family. Type 1 subfamily. In terms of assembly, interacts with the Sec translocase complex via SecD. Specifically interacts with transmembrane segments of nascent integral membrane proteins during membrane integration.

The protein localises to the cell inner membrane. In terms of biological role, required for the insertion and/or proper folding and/or complex formation of integral membrane proteins into the membrane. Involved in integration of membrane proteins that insert both dependently and independently of the Sec translocase complex, as well as at least some lipoproteins. Aids folding of multispanning membrane proteins. The chain is Membrane protein insertase YidC from Burkholderia ambifaria (strain MC40-6).